A 310-amino-acid polypeptide reads, in one-letter code: tRNA-cytidine(32) 2-sulfurtransferase (310 aa).

The short motif at 47-52 is the PP-loop motif element; sequence SGGKDS. 3 residues coordinate [4Fe-4S] cluster: Cys122, Cys125, and Cys213.

It belongs to the TtcA family. As to quaternary structure, homodimer. Mg(2+) is required as a cofactor. It depends on [4Fe-4S] cluster as a cofactor.

It is found in the cytoplasm. The enzyme catalyses cytidine(32) in tRNA + S-sulfanyl-L-cysteinyl-[cysteine desulfurase] + AH2 + ATP = 2-thiocytidine(32) in tRNA + L-cysteinyl-[cysteine desulfurase] + A + AMP + diphosphate + H(+). It participates in tRNA modification. Functionally, catalyzes the ATP-dependent 2-thiolation of cytidine in position 32 of tRNA, to form 2-thiocytidine (s(2)C32). The sulfur atoms are provided by the cysteine/cysteine desulfurase (IscS) system. This Haemophilus influenzae (strain PittEE) protein is tRNA-cytidine(32) 2-sulfurtransferase.